Consider the following 122-residue polypeptide: Sterile alpha motif domain-containing protein 13 (122 aa).

Positions 51 to 119 (WAVMDVVNYF…KPLQTKHLKN (69 aa)) constitute an SAM domain.

The chain is Sterile alpha motif domain-containing protein 13 (SAMD13) from Homo sapiens (Human).